Reading from the N-terminus, the 468-residue chain is Ribosomal lysine N-methyltransferase 4 (468 aa).

The 281-residue stretch at 22 to 302 (EKIGLNDYRH…KGEQLWNTYG (281 aa)) folds into the SET domain. The interval 188–225 (ISNENEKSAAETSIKEDKNGDAAKKNEGSANQDDEKLH) is disordered. An S-adenosyl-L-methionine-binding site is contributed by Y301.

The protein belongs to the class V-like SAM-binding methyltransferase superfamily. Histone-lysine methyltransferase family. SETD6 subfamily.

It is found in the nucleus. Its function is as follows. S-adenosyl-L-methionine-dependent protein-lysine N-methyltransferase that monomethylates 60S ribosomal protein L42 (rpl42) at 'Lys-55'. In Schizosaccharomyces pombe (strain 972 / ATCC 24843) (Fission yeast), this protein is Ribosomal lysine N-methyltransferase 4.